A 363-amino-acid polypeptide reads, in one-letter code: Somatostatin receptor type 5 (363 aa).

Residues 1 to 35 (MEPLSLASTPSWNASAASSGNHNWSLVGSASPMGA) lie on the Extracellular side of the membrane. N-linked (GlcNAc...) asparagine glycosylation is found at Asn-13 and Asn-23. Residues 36–63 (RAVLVPVLYLLVCTVGLSGNTLVIYVVL) traverse the membrane as a helical segment. Over 64 to 73 (RHAKMKTVTN) the chain is Cytoplasmic. Residues 74–99 (VYILNLAVADVLFMLGLPFLATQNAV) traverse the membrane as a helical segment. The Extracellular segment spans residues 100–111 (VSYWPFGSFLCR). Cys-110 and Cys-185 form a disulfide bridge. A helical transmembrane segment spans residues 112–133 (LVMTLDGINQFTSIFCLMVMSV). Residues 134 to 155 (DRYLAVVHPLRSARWRRPRVAK) lie on the Cytoplasmic side of the membrane. The chain crosses the membrane as a helical span at residues 156–176 (MASAAVWVFSLLMSLPLLVFA). Residues 177-196 (DVQEGWGTCNLSWPEPVGLW) are Extracellular-facing. Asn-186 carries N-linked (GlcNAc...) asparagine glycosylation. A helical membrane pass occupies residues 197–221 (GAAFITYTSVLGFFGPLLVICLCYL). The Cytoplasmic portion of the chain corresponds to 222–247 (LIVVKVKAAGMRVGSSRRRRSEPKVT). The chain crosses the membrane as a helical span at residues 248 to 273 (RMVVVVVLVFVGCWLPFFIVNIVNLA). The Extracellular segment spans residues 274-283 (FTLPEEPTSA). Residues 284–308 (GLYFFVVVLSYANSCANPLLYGFLS) traverse the membrane as a helical segment. The Cytoplasmic portion of the chain corresponds to 309-363 (DNFRQSFRKVLCLRRGYGMEDADAIEPRPDKSGRPQATLPTRSCEANGLMQTSRI). A lipid anchor (S-palmitoyl cysteine; by ZDHHC5) is attached at Cys-320. The tract at residues 331 to 363 (DAIEPRPDKSGRPQATLPTRSCEANGLMQTSRI) is disordered.

The protein belongs to the G-protein coupled receptor 1 family. In terms of assembly, heterodimer with SSTR2. Heterodimerization with SSTR2 increases cell growth inhibition activity of SSTR2. Palmitoylated at Cys-320 by ZDHHC5, but not ZDHHC8. Palmitoylation creates an additional intracellular loop which is thought to be important for efficient coupling to G-proteins and may target the protein to lipid rafts. Prominent in the pituitary and small intestine. Low levels in islets and spleen. Not detected in kidney, pancreas, cerebellum, or cortex.

The protein resides in the cell membrane. Its function is as follows. Receptor for somatostatin-28. The activity of this receptor is mediated by G proteins which inhibit adenylyl cyclase. Increases cell growth inhibition activity of SSTR2 following heterodimerization. In Rattus norvegicus (Rat), this protein is Somatostatin receptor type 5 (Sstr5).